A 316-amino-acid polypeptide reads, in one-letter code: 4-hydroxy-3-methylbut-2-enyl diphosphate reductase (316 aa).

Cys-12 contributes to the [4Fe-4S] cluster binding site. His-41 and His-74 together coordinate (2E)-4-hydroxy-3-methylbut-2-enyl diphosphate. The dimethylallyl diphosphate site is built by His-41 and His-74. 2 residues coordinate isopentenyl diphosphate: His-41 and His-74. Cys-96 serves as a coordination point for [4Fe-4S] cluster. A (2E)-4-hydroxy-3-methylbut-2-enyl diphosphate-binding site is contributed by His-124. His-124 is a binding site for dimethylallyl diphosphate. An isopentenyl diphosphate-binding site is contributed by His-124. Glu-126 (proton donor) is an active-site residue. Residue Thr-168 participates in (2E)-4-hydroxy-3-methylbut-2-enyl diphosphate binding. Cys-198 contributes to the [4Fe-4S] cluster binding site. (2E)-4-hydroxy-3-methylbut-2-enyl diphosphate-binding residues include Ser-226, Ser-227, Asn-228, and Ser-270. 4 residues coordinate dimethylallyl diphosphate: Ser-226, Ser-227, Asn-228, and Ser-270. Residues Ser-226, Ser-227, Asn-228, and Ser-270 each contribute to the isopentenyl diphosphate site.

The protein belongs to the IspH family. The cofactor is [4Fe-4S] cluster.

It carries out the reaction isopentenyl diphosphate + 2 oxidized [2Fe-2S]-[ferredoxin] + H2O = (2E)-4-hydroxy-3-methylbut-2-enyl diphosphate + 2 reduced [2Fe-2S]-[ferredoxin] + 2 H(+). It catalyses the reaction dimethylallyl diphosphate + 2 oxidized [2Fe-2S]-[ferredoxin] + H2O = (2E)-4-hydroxy-3-methylbut-2-enyl diphosphate + 2 reduced [2Fe-2S]-[ferredoxin] + 2 H(+). The protein operates within isoprenoid biosynthesis; dimethylallyl diphosphate biosynthesis; dimethylallyl diphosphate from (2E)-4-hydroxy-3-methylbutenyl diphosphate: step 1/1. It participates in isoprenoid biosynthesis; isopentenyl diphosphate biosynthesis via DXP pathway; isopentenyl diphosphate from 1-deoxy-D-xylulose 5-phosphate: step 6/6. In terms of biological role, catalyzes the conversion of 1-hydroxy-2-methyl-2-(E)-butenyl 4-diphosphate (HMBPP) into a mixture of isopentenyl diphosphate (IPP) and dimethylallyl diphosphate (DMAPP). Acts in the terminal step of the DOXP/MEP pathway for isoprenoid precursor biosynthesis. The chain is 4-hydroxy-3-methylbut-2-enyl diphosphate reductase from Acinetobacter baumannii (strain AB307-0294).